The following is a 65-amino-acid chain: Large ribosomal subunit protein bL32 (65 aa).

Residues 1–19 (MAIVPKRKTSKQRKHKRQS) show a composition bias toward basic residues. Residues 1–21 (MAIVPKRKTSKQRKHKRQSHS) are disordered.

Belongs to the bacterial ribosomal protein bL32 family.

The protein is Large ribosomal subunit protein bL32 of Mesomycoplasma hyopneumoniae (strain 7448) (Mycoplasma hyopneumoniae).